Here is a 419-residue protein sequence, read N- to C-terminus: Putative L-glutamine:3-amino-2,3-dideoxy-scyllo-inosose aminotransferase (419 aa).

At lysine 199 the chain carries N6-(pyridoxal phosphate)lysine.

This sequence belongs to the DegT/DnrJ/EryC1 family. L-glutamine:2-deoxy-scyllo-inosose/scyllo-inosose aminotransferase subfamily. Pyridoxal 5'-phosphate serves as cofactor.

The catalysed reaction is 3-amino-2,3-dideoxy-scyllo-inosose + L-glutamine = 2-deoxystreptamine + 2-oxoglutaramate. Its pathway is metabolic intermediate biosynthesis; 2-deoxystreptamine biosynthesis; 2-deoxystreptamine from D-glucose 6-phosphate: step 4/4. It participates in antibiotic biosynthesis; kanamycin biosynthesis. Catalyzes the transamination of 3-amino-2,3-dideoxy-scyllo-inosose (amino-DOI) into 2-deoxystreptamine (DOS). In Streptomyces kanamyceticus, this protein is Putative L-glutamine:3-amino-2,3-dideoxy-scyllo-inosose aminotransferase (kanD).